The following is a 414-amino-acid chain: Acyltransferase MYCGRDRAFT_85486 (414 aa).

Positions 16–25 (DGTSTVTIRP) are enriched in polar residues. A disordered region spans residues 16–47 (DGTSTVTIRPTQKAAPSEEPSQDTAPSKKDSN). Residue His329 coordinates substrate. The Proton acceptor role is filled by Glu367.

Belongs to the lysine N-acyltransferase mbtK family.

Its pathway is siderophore biosynthesis. Functionally, acyltransferase; part of the gene cluster 14 that mediates the biosynthesis of a ferrichrome A-like siderophore which may contribute to organismal virulence. The first step of siderophore biosynthesis is performed by the HMG-CoA synthase (HMGS) MYCGRDRAFT_54740 which catalyzes the generation of HMG-CoA and CoA using acetoacetyl-CoA and acetyl-CoA as substrates. The enoyl-CoA isomerase/hydratase MYCGRDRAFT_76805 then catalyzes the conversion of HMG-CoA to methylglutaconyl-CoA. The acyltransferase MYCGRDRAFT_85486 then fuses methylglutaconyl-CoA with hydroxyornithine to yield methylglutaconyl hydroxyornithine. Methylglutaconyl hydroxyornithine is then available for use by the nonribosomal peptide synthetase NRPS2 to generate the ferrichrome A-like siderophore. The polypeptide is Acyltransferase MYCGRDRAFT_85486 (Zymoseptoria tritici (strain CBS 115943 / IPO323) (Speckled leaf blotch fungus)).